The chain runs to 339 residues: 4-hydroxy-2-oxovalerate aldolase (339 aa).

The Pyruvate carboxyltransferase domain maps to 7–257; it reads IRIMDTTLRD…QVGVDLYKIM (251 aa). Residue 15 to 16 coordinates substrate; sequence RD. Asp-16 is a Mn(2+) binding site. The active-site Proton acceptor is the His-19. Substrate-binding residues include Ser-169 and His-196. Positions 196 and 198 each coordinate Mn(2+). Tyr-286 contributes to the substrate binding site.

This sequence belongs to the 4-hydroxy-2-oxovalerate aldolase family.

The catalysed reaction is (S)-4-hydroxy-2-oxopentanoate = acetaldehyde + pyruvate. The chain is 4-hydroxy-2-oxovalerate aldolase from Pelotomaculum thermopropionicum (strain DSM 13744 / JCM 10971 / SI).